The primary structure comprises 173 residues: Large ribosomal subunit protein uL16 (173 aa).

This sequence belongs to the universal ribosomal protein uL16 family.

In Methanosarcina mazei (strain ATCC BAA-159 / DSM 3647 / Goe1 / Go1 / JCM 11833 / OCM 88) (Methanosarcina frisia), this protein is Large ribosomal subunit protein uL16.